We begin with the raw amino-acid sequence, 247 residues long: Adenosylcobinamide-GDP ribazoletransferase (247 aa).

Transmembrane regions (helical) follow at residues 34–54 (IITF…VFMV), 59–79 (CGVP…TGGF), 113–133 (GGLA…ELTL), 138–158 (ILAS…LLMY), and 194–214 (VLLP…AIFI).

This sequence belongs to the CobS family. Requires Mg(2+) as cofactor.

Its subcellular location is the cell inner membrane. It catalyses the reaction alpha-ribazole + adenosylcob(III)inamide-GDP = adenosylcob(III)alamin + GMP + H(+). It carries out the reaction alpha-ribazole 5'-phosphate + adenosylcob(III)inamide-GDP = adenosylcob(III)alamin 5'-phosphate + GMP + H(+). Its pathway is cofactor biosynthesis; adenosylcobalamin biosynthesis; adenosylcobalamin from cob(II)yrinate a,c-diamide: step 7/7. Functionally, joins adenosylcobinamide-GDP and alpha-ribazole to generate adenosylcobalamin (Ado-cobalamin). Also synthesizes adenosylcobalamin 5'-phosphate from adenosylcobinamide-GDP and alpha-ribazole 5'-phosphate. The sequence is that of Adenosylcobinamide-GDP ribazoletransferase from Escherichia coli O127:H6 (strain E2348/69 / EPEC).